A 686-amino-acid polypeptide reads, in one-letter code: Pollen receptor-like kinase 5 (686 aa).

The signal sequence occupies residues 1-39; that stretch reads MRNWEDPFTLACNTALKKNLPSCIFIIIFISVLCPVAMS. Residues 40 to 283 lie on the Extracellular side of the membrane; it reads QVVVPDSDAD…GKKAGSFYTL (244 aa). N-linked (GlcNAc...) asparagine glycosylation is present at Asn60. LRR repeat units lie at residues 112 to 135, 136 to 159, 161 to 184, 185 to 208, and 210 to 230; these read MKNLRTISFMNNNFNGPMPQVKRF, TSLKSLYLSNNRFSGEIPADAFLG, PLLKKILLANNAFRGTIPSSLASL, PMLLELRLNGNQFQGQIPSFQQKD, and KLASFENNDLDGPIPESLRNM. Residues 284 to 304 traverse the membrane as a helical segment; that stretch reads AIILIVIGIILVIIALVFCFV. Topologically, residues 305–686 are cytoplasmic; that stretch reads QSRRRNFLSA…DDDFGFSMNR (382 aa). Residues 328–339 are compositionally biased toward polar residues; sequence NYHQSTNKNNKP. The interval 328–355 is disordered; that stretch reads NYHQSTNKNNKPAESVNHTRRGSMPDPG. Residues 375-648 form the Protein kinase domain; the sequence is RASAEVLGSG…REVVEMVEML (274 aa). Position 377 is a phosphoserine (Ser377). ATP contacts are provided by residues 381 to 389 and Lys403; that span reads LGSGTFGAS. 2 positions are modified to phosphoserine: Ser455 and Ser458. At Thr472 the chain carries Phosphothreonine. Residue Tyr542 is modified to Phosphotyrosine. Ser545 bears the Phosphoserine mark.

Belongs to the protein kinase superfamily. Ser/Thr protein kinase family. As to quaternary structure, interacts with the GRI peptide. In terms of tissue distribution, expressed in pollen and/or in flowers. Detected at low levels in leaves.

It localises to the cell membrane. It carries out the reaction L-seryl-[protein] + ATP = O-phospho-L-seryl-[protein] + ADP + H(+). It catalyses the reaction L-threonyl-[protein] + ATP = O-phospho-L-threonyl-[protein] + ADP + H(+). Receptor-like kinase involved in the control of pollen germination and pollen tube polar growth. The extracellular domain serves as a sensor for peptides derived from GRI. May act as a downstream element for ROS-dependent cell death induced by GRI. This chain is Pollen receptor-like kinase 5, found in Arabidopsis thaliana (Mouse-ear cress).